We begin with the raw amino-acid sequence, 376 residues long: Partitioning defective 6 homolog gamma (376 aa).

The PB1 domain maps to 18–98 (AVEVKSKFGA…PLLRVFIQKR (81 aa)). The interaction with PARD3 and CDC42 stretch occupies residues 127–254 (RRRAHLDIGL…VTVKPANQRN (128 aa)). The Pseudo-CRIB domain occupies 134 to 151 (IGLPRDFRPVSSIIDVDL). The PDZ domain occupies 158-251 (RVRLHRHGCE…NLIVTVKPAN (94 aa)). The tract at residues 356–376 (PRHSLALPPGGVEEHGPAVTL) is disordered. Over residues 367 to 376 (VEEHGPAVTL) the composition is skewed to basic and acidic residues.

Belongs to the PAR6 family. As to quaternary structure, interacts with PARD3. Interacts with GTP-bound forms of CDC42, RHOQ/TC10 and RAC1. Interacts with the N-terminal part of PRKCI and PRKCZ. In terms of tissue distribution, widely expressed, with a higher expression in fetal and adult kidney.

It is found in the cytoplasm. It localises to the cell membrane. The protein resides in the cell junction. The protein localises to the tight junction. Adapter protein involved in asymmetrical cell division and cell polarization processes. May play a role in the formation of epithelial tight junctions. The PARD6-PARD3 complex links GTP-bound Rho small GTPases to atypical protein kinase C proteins. This Homo sapiens (Human) protein is Partitioning defective 6 homolog gamma (PARD6G).